We begin with the raw amino-acid sequence, 924 residues long: Type II inositol 3,4-bisphosphate 4-phosphatase (924 aa).

Basic and acidic residues predominate over residues 1–13 (MEIKEEGASEEGQ). Disordered regions lie at residues 1-25 (MEIK…SDPG), 481-516 (ILKK…HSDY), and 546-569 (DGGS…DAIP). The region spanning 23-165 (DPGDCQFTSI…LKSKEQLLVL (143 aa)) is the C2 domain.

Belongs to the inositol 3,4-bisphosphate 4-phosphatase family.

It catalyses the reaction a 1,2-diacyl-sn-glycero-3-phospho-(1D-myo-inositol-3,4-bisphosphate) + H2O = a 1,2-diacyl-sn-glycero-3-phospho-(1D-myo-inositol-3-phosphate) + phosphate. The catalysed reaction is 1D-myo-inositol 1,3,4-trisphosphate + H2O = 1D-myo-inositol 1,3-bisphosphate + phosphate. The enzyme catalyses 1D-myo-inositol 3,4-bisphosphate + H2O = 1D-myo-inositol 3-phosphate + phosphate. It participates in signal transduction; phosphatidylinositol signaling pathway. Strongly inhibited by inositol hexakisphosphate. Functionally, catalyzes the hydrolysis of the 4-position phosphate of phosphatidylinositol 3,4-bisphosphate, inositol 1,3,4-trisphosphate and inositol 3,4-bisphosphate. Plays a role in the late stages of macropinocytosis by dephosphorylating phosphatidylinositol 3,4-bisphosphate in membrane ruffles. Antagonizes the PI3K-AKT/PKB signaling pathway by dephosphorylating phosphoinositides and thereby modulating cell cycle progression and cell survival. This Pongo abelii (Sumatran orangutan) protein is Type II inositol 3,4-bisphosphate 4-phosphatase (INPP4B).